We begin with the raw amino-acid sequence, 456 residues long: Na(+)-translocating NADH-quinone reductase subunit A (456 aa).

This sequence belongs to the NqrA family. In terms of assembly, composed of six subunits; NqrA, NqrB, NqrC, NqrD, NqrE and NqrF.

The catalysed reaction is a ubiquinone + n Na(+)(in) + NADH + H(+) = a ubiquinol + n Na(+)(out) + NAD(+). NQR complex catalyzes the reduction of ubiquinone-1 to ubiquinol by two successive reactions, coupled with the transport of Na(+) ions from the cytoplasm to the periplasm. NqrA to NqrE are probably involved in the second step, the conversion of ubisemiquinone to ubiquinol. The polypeptide is Na(+)-translocating NADH-quinone reductase subunit A (Rhodopirellula baltica (strain DSM 10527 / NCIMB 13988 / SH1)).